A 119-amino-acid polypeptide reads, in one-letter code: Large ribosomal subunit protein uL18 (119 aa).

It belongs to the universal ribosomal protein uL18 family. As to quaternary structure, part of the 50S ribosomal subunit; part of the 5S rRNA/L5/L18/L25 subcomplex. Contacts the 5S and 23S rRNAs.

In terms of biological role, this is one of the proteins that bind and probably mediate the attachment of the 5S RNA into the large ribosomal subunit, where it forms part of the central protuberance. This Clostridium tetani (strain Massachusetts / E88) protein is Large ribosomal subunit protein uL18.